A 561-amino-acid polypeptide reads, in one-letter code: Glutamine--tRNA ligase (561 aa).

The 'HIGH' region signature appears at 34 to 44 (PEPNGYLHIGH). Residues 35–37 (EPN) and 41–47 (HIGHAKS) contribute to the ATP site. L-glutamine-binding residues include Asp-67 and Tyr-212. Residues Thr-231, 261–262 (RL), and 269–271 (MSK) each bind ATP. Residues 268-272 (VMSKR) carry the 'KMSKS' region motif.

Belongs to the class-I aminoacyl-tRNA synthetase family. Monomer.

It is found in the cytoplasm. The enzyme catalyses tRNA(Gln) + L-glutamine + ATP = L-glutaminyl-tRNA(Gln) + AMP + diphosphate. This Idiomarina loihiensis (strain ATCC BAA-735 / DSM 15497 / L2-TR) protein is Glutamine--tRNA ligase.